The primary structure comprises 286 residues: Polygalacturonan/rhamnogalacturonan transport system permease protein YtcP (286 aa).

6 consecutive transmembrane segments (helical) span residues 9–29 (LIYGFLLMFALICVLPFIHVI), 69–89 (LLVSVFVTVIGTAVSMFLSSL), 106–126 (MFLVVFTMLFSGGMIPTFLVV), 131–151 (LLDSYWALILPTAINAFNLII), 176–196 (GIFFKIVLPLSLPAIATISLF), and 251–271 (TIKMAVIVVATIPVLLVYPFI). An ABC transmembrane type-1 domain is found at 69-271 (LLVSVFVTVI…IPVLLVYPFI (203 aa)).

It belongs to the binding-protein-dependent transport system permease family. CysTW subfamily. In terms of assembly, the complex is probably composed of two ATP-binding proteins (MsmX), two transmembrane proteins (YtcP and YteP) and a solute-binding protein (YtcQ).

It localises to the cell membrane. Functionally, involved in pectin degradation. Part of the ABC transporter complex YtcQP-YteP involved in the uptake of polygalacturonan and rhamnogalacturonan type I. Responsible for the translocation of the substrate across the membrane. This is Polygalacturonan/rhamnogalacturonan transport system permease protein YtcP (ytcP) from Bacillus subtilis (strain 168).